The following is a 488-amino-acid chain: MNSLYIAGEWLAGQGEAFQSLNPVTQQVLWSGEGATAAQVESAVQAARQAFPGWARRTLEDRISVLEAFAAALKNHADELARTIGEETGKPLWEAATEVTSMVNKIAISVQSYRERTGEKSGPLGDATAVLRHKPHGVVAVFGPYNFPGHLPNGHIVPALLAGNSVLFKPSELTPKVAELTVKCWIEAGLPAGVLNLLQGARETGIALAANPGIDGLFFTGSSRTGNHLHQQFAGRPDKILALEMGGNNPLVVDQVADIDAAVYTIIQSAFISAGQRCTCARRLLVPEGAWGDSLLKRLVEVSSTIEVGAFDQQPAPFMGSVVSLGAAKALMDAQAHLLANGAVSLLAMTQPQAQSALLTPGIVDVTAVADRSDEELFGPLLQVIRYADFAAAIAEANDTAFGLAAGLLSDSEERYQQFWLESRAGIVNWNKQLTGAASSAPFGGVGASGNHRASAYYAADYCAYPVASLETPSLVLPAALTPGVKMA.

Residue 221–226 coordinates NAD(+); sequence GSSRTG. Active-site residues include Glu-244 and Cys-278.

The protein belongs to the aldehyde dehydrogenase family. AstD subfamily.

It catalyses the reaction N-succinyl-L-glutamate 5-semialdehyde + NAD(+) + H2O = N-succinyl-L-glutamate + NADH + 2 H(+). The protein operates within amino-acid degradation; L-arginine degradation via AST pathway; L-glutamate and succinate from L-arginine: step 4/5. Functionally, catalyzes the NAD-dependent reduction of succinylglutamate semialdehyde into succinylglutamate. This Pseudomonas fluorescens (strain Pf0-1) protein is N-succinylglutamate 5-semialdehyde dehydrogenase.